The primary structure comprises 95 residues: Large ribosomal subunit protein uL23 (95 aa).

Belongs to the universal ribosomal protein uL23 family. Part of the 50S ribosomal subunit. Contacts protein L29, and trigger factor when it is bound to the ribosome.

In terms of biological role, one of the early assembly proteins it binds 23S rRNA. One of the proteins that surrounds the polypeptide exit tunnel on the outside of the ribosome. Forms the main docking site for trigger factor binding to the ribosome. This Shouchella clausii (strain KSM-K16) (Alkalihalobacillus clausii) protein is Large ribosomal subunit protein uL23.